A 750-amino-acid chain; its full sequence is Photosystem I P700 chlorophyll a apoprotein A1 (750 aa).

The next 8 membrane-spanning stretches (helical) occupy residues 70–93 (VFSA…FHGA), 156–179 (LYCT…FHYH), 195–219 (LNHH…HVSL), 291–309 (IAHH…GHMY), 346–369 (WHAQ…HHMY), 385–411 (LSLF…IFMV), 433–455 (AIIS…LYIH), and 531–549 (FLVH…LILL). Positions 573 and 582 each coordinate [4Fe-4S] cluster. Helical transmembrane passes span 589–610 (HVFL…HFSW) and 664–686 (LSAY…MFLF). His675 provides a ligand contact to chlorophyll a'. Residues Met683 and Tyr691 each coordinate chlorophyll a. Trp692 contacts phylloquinone. Residues 724-744 (AVGVTHYLLGGIATTWAFFLA) form a helical membrane-spanning segment.

The protein belongs to the PsaA/PsaB family. As to quaternary structure, the PsaA/B heterodimer binds the P700 chlorophyll special pair and subsequent electron acceptors. PSI consists of a core antenna complex that captures photons, and an electron transfer chain that converts photonic excitation into a charge separation. The eukaryotic PSI reaction center is composed of at least 11 subunits. P700 is a chlorophyll a/chlorophyll a' dimer, A0 is one or more chlorophyll a, A1 is one or both phylloquinones and FX is a shared 4Fe-4S iron-sulfur center. serves as cofactor.

The protein localises to the plastid. Its subcellular location is the chloroplast thylakoid membrane. It catalyses the reaction reduced [plastocyanin] + hnu + oxidized [2Fe-2S]-[ferredoxin] = oxidized [plastocyanin] + reduced [2Fe-2S]-[ferredoxin]. In terms of biological role, psaA and PsaB bind P700, the primary electron donor of photosystem I (PSI), as well as the electron acceptors A0, A1 and FX. PSI is a plastocyanin-ferredoxin oxidoreductase, converting photonic excitation into a charge separation, which transfers an electron from the donor P700 chlorophyll pair to the spectroscopically characterized acceptors A0, A1, FX, FA and FB in turn. Oxidized P700 is reduced on the lumenal side of the thylakoid membrane by plastocyanin. The sequence is that of Photosystem I P700 chlorophyll a apoprotein A1 from Atropa belladonna (Belladonna).